Consider the following 846-residue polypeptide: DNA mismatch repair protein MutS (846 aa).

ATP is bound at residue 610-617 (GPNMGGKS).

This sequence belongs to the DNA mismatch repair MutS family.

Functionally, this protein is involved in the repair of mismatches in DNA. It is possible that it carries out the mismatch recognition step. This protein has a weak ATPase activity. This Legionella pneumophila (strain Lens) protein is DNA mismatch repair protein MutS.